We begin with the raw amino-acid sequence, 156 residues long: Lipoprotein signal peptidase (156 aa).

3 helical membrane-spanning segments follow: residues 5–25, 64–84, and 89–109; these read FKFI…DQWV, YLHL…RTLL, and IAFG…FIHG. Residues aspartate 113 and aspartate 130 contribute to the active site. A helical transmembrane segment spans residues 122–142; that stretch reads NFAIFNVADVMINISVALILI.

This sequence belongs to the peptidase A8 family.

It localises to the cell inner membrane. The enzyme catalyses Release of signal peptides from bacterial membrane prolipoproteins. Hydrolyzes -Xaa-Yaa-Zaa-|-(S,diacylglyceryl)Cys-, in which Xaa is hydrophobic (preferably Leu), and Yaa (Ala or Ser) and Zaa (Gly or Ala) have small, neutral side chains.. Its pathway is protein modification; lipoprotein biosynthesis (signal peptide cleavage). In terms of biological role, this protein specifically catalyzes the removal of signal peptides from prolipoproteins. This chain is Lipoprotein signal peptidase, found in Campylobacter jejuni subsp. jejuni serotype O:2 (strain ATCC 700819 / NCTC 11168).